The chain runs to 369 residues: Molybdenum import ATP-binding protein ModC (369 aa).

The ABC transporter domain occupies 7–243; the sequence is PGQAGIHARF…LDLPMAMTDD (237 aa). Residue 41–48 coordinates ATP; that stretch reads GQSGSGKT. The Mop domain occupies 304–369; that stretch reads EGSILNVLAV…AQIKAVSLLA (66 aa).

It belongs to the ABC transporter superfamily. Molybdate importer (TC 3.A.1.8) family. The complex is composed of two ATP-binding proteins (ModC), two transmembrane proteins (ModB) and a solute-binding protein (ModA).

The protein localises to the cell inner membrane. The catalysed reaction is molybdate(out) + ATP + H2O = molybdate(in) + ADP + phosphate + H(+). Part of the ABC transporter complex ModABC involved in molybdenum import. Responsible for energy coupling to the transport system. The sequence is that of Molybdenum import ATP-binding protein ModC from Bordetella pertussis (strain Tohama I / ATCC BAA-589 / NCTC 13251).